We begin with the raw amino-acid sequence, 359 residues long: 3-dehydroquinate synthase (359 aa).

Residues 71–76, 105–109, 129–130, Lys142, and Lys151 contribute to the NAD(+) site; these read DGEAYK, GVVGD, and TT. Residues Glu184, His247, and His264 each contribute to the Zn(2+) site.

The protein belongs to the sugar phosphate cyclases superfamily. Dehydroquinate synthase family. Requires Co(2+) as cofactor. Zn(2+) is required as a cofactor. NAD(+) serves as cofactor.

It localises to the cytoplasm. It catalyses the reaction 7-phospho-2-dehydro-3-deoxy-D-arabino-heptonate = 3-dehydroquinate + phosphate. It participates in metabolic intermediate biosynthesis; chorismate biosynthesis; chorismate from D-erythrose 4-phosphate and phosphoenolpyruvate: step 2/7. Catalyzes the conversion of 3-deoxy-D-arabino-heptulosonate 7-phosphate (DAHP) to dehydroquinate (DHQ). In Burkholderia cenocepacia (strain ATCC BAA-245 / DSM 16553 / LMG 16656 / NCTC 13227 / J2315 / CF5610) (Burkholderia cepacia (strain J2315)), this protein is 3-dehydroquinate synthase.